We begin with the raw amino-acid sequence, 365 residues long: Class I histocompatibility antigen, Gogo-A*0501 alpha chain (365 aa).

The N-terminal stretch at Met1–Ala24 is a signal peptide. The alpha-1 stretch occupies residues Gly25–Asp114. Topologically, residues Gly25–Ile308 are extracellular. An N-linked (GlcNAc...) asparagine glycan is attached at Asn110. An alpha-2 region spans residues Gly115–Thr206. Disulfide bonds link Cys125–Cys188 and Cys227–Cys283. An alpha-3 region spans residues Asp207–Trp298. The Ig-like C1-type domain occupies Pro209 to Thr295. The connecting peptide stretch occupies residues Glu299 to Ile308. The chain crosses the membrane as a helical span at residues Val309–Trp332. Topologically, residues Arg333–Val365 are cytoplasmic. The interval Asp338 to Val365 is disordered. Residues Gly342–Ser359 show a composition bias toward low complexity. Ser343 carries the post-translational modification Phosphoserine. Tyr344 carries the post-translational modification Phosphotyrosine. A phosphoserine mark is found at Ser345, Ser349, Ser352, Ser356, and Ser359.

It belongs to the MHC class I family. As to quaternary structure, heterodimer of an alpha chain and a beta chain (beta-2-microglobulin).

Its subcellular location is the membrane. Functionally, involved in the presentation of foreign antigens to the immune system. The sequence is that of Class I histocompatibility antigen, Gogo-A*0501 alpha chain from Gorilla gorilla gorilla (Western lowland gorilla).